A 289-amino-acid polypeptide reads, in one-letter code: Shikimate dehydrogenase (NADP(+)) (289 aa).

Shikimate-binding positions include 19–21 (SLS) and Thr-66. Residue Lys-70 is the Proton acceptor of the active site. Shikimate contacts are provided by Asn-91 and Asp-106. Residues 131–135 (GNGGA) and Leu-229 contribute to the NADP(+) site. A shikimate-binding site is contributed by Tyr-231. Gly-252 lines the NADP(+) pocket.

Belongs to the shikimate dehydrogenase family. In terms of assembly, homodimer.

It catalyses the reaction shikimate + NADP(+) = 3-dehydroshikimate + NADPH + H(+). The protein operates within metabolic intermediate biosynthesis; chorismate biosynthesis; chorismate from D-erythrose 4-phosphate and phosphoenolpyruvate: step 4/7. Functionally, involved in the biosynthesis of the chorismate, which leads to the biosynthesis of aromatic amino acids. Catalyzes the reversible NADPH linked reduction of 3-dehydroshikimate (DHSA) to yield shikimate (SA). This is Shikimate dehydrogenase (NADP(+)) from Nostoc sp. (strain PCC 7120 / SAG 25.82 / UTEX 2576).